Consider the following 198-residue polypeptide: Small ribosomal subunit protein uS5 (198 aa).

One can recognise an S5 DRBM domain in the interval 46–109 (LEDDVLEISM…NNAKLNIFKV (64 aa)).

This sequence belongs to the universal ribosomal protein uS5 family. Part of the 30S ribosomal subunit. Contacts protein S4.

With S4 and S12 plays an important role in translational accuracy. The protein is Small ribosomal subunit protein uS5 of Archaeoglobus fulgidus (strain ATCC 49558 / DSM 4304 / JCM 9628 / NBRC 100126 / VC-16).